The sequence spans 344 residues: Putative transport protein sll0060 (344 aa).

Helical transmembrane passes span 14-34, 41-61, 72-92, 155-175, 215-235, 237-257, 262-282, and 310-330; these read LWIG…LQIL, LRIF…VRWL, AVAL…LLVI, LINL…IFIM, IGQA…LSIF, VPLA…PFGG, VLIS…VLAI, and ILLS…LVAI.

Belongs to the autoinducer-2 exporter (AI-2E) (TC 2.A.86) family.

Its subcellular location is the cell membrane. This Synechocystis sp. (strain ATCC 27184 / PCC 6803 / Kazusa) protein is Putative transport protein sll0060.